The sequence spans 184 residues: ATP synthase subunit b, chloroplastic (184 aa).

Residues 27-49 form a helical membrane-spanning segment; the sequence is LATNPINLSVVLGVLIFFGKGVL.

It belongs to the ATPase B chain family. In terms of assembly, F-type ATPases have 2 components, F(1) - the catalytic core - and F(0) - the membrane proton channel. F(1) has five subunits: alpha(3), beta(3), gamma(1), delta(1), epsilon(1). F(0) has four main subunits: a(1), b(1), b'(1) and c(10-14). The alpha and beta chains form an alternating ring which encloses part of the gamma chain. F(1) is attached to F(0) by a central stalk formed by the gamma and epsilon chains, while a peripheral stalk is formed by the delta, b and b' chains.

The protein resides in the plastid. It localises to the chloroplast thylakoid membrane. Functionally, f(1)F(0) ATP synthase produces ATP from ADP in the presence of a proton or sodium gradient. F-type ATPases consist of two structural domains, F(1) containing the extramembraneous catalytic core and F(0) containing the membrane proton channel, linked together by a central stalk and a peripheral stalk. During catalysis, ATP synthesis in the catalytic domain of F(1) is coupled via a rotary mechanism of the central stalk subunits to proton translocation. Its function is as follows. Component of the F(0) channel, it forms part of the peripheral stalk, linking F(1) to F(0). The protein is ATP synthase subunit b, chloroplastic of Carica papaya (Papaya).